Here is a 461-residue protein sequence, read N- to C-terminus: Coronin-1A (461 aa).

Ser-2 carries the N-acetylserine modification. Ser-2 is subject to Phosphoserine; by PKC. WD repeat units lie at residues 13–63 (HVFG…LVLP), 73–110 (NAPTVCGHTAPVLDIAWCPHNDNVIASGSEDCTVMVWE), 123–160 (PVVTLEGHTKRVGIVAWHTTAQNVLLSAGCDNVIMVWD), 164–204 (GAAM…RIIE), 207–251 (KGTV…ALWD), 258–296 (PLSLQELDTSSGVLLPFFDPDTNIVYLCGKGDSSIRYFE), and 302–349 (PFLH…EPIA). Residues 403–418 (ELRVNRGLDTGRRRAA) are compositionally biased toward basic and acidic residues. Residues 403–432 (ELRVNRGLDTGRRRAAPEASGTPSSDAVSR) are disordered. Position 412 is a phosphothreonine; by PKC (Thr-412). Ser-422 is modified (phosphoserine). Residues 424–460 (TPSSDAVSRLEEEMRKLQATVQELQKRLDRLEETVQA) adopt a coiled-coil conformation. Lys-449 is subject to N6-acetyllysine.

It belongs to the WD repeat coronin family. In terms of assembly, binds actin. Phosphorylation at Thr-412 by PKC strongly down-regulates the association with actin. In terms of processing, polyubiquitinated by RNF128 with 'Lys-48'-linked chains, leading to proteasomal degradation. In terms of tissue distribution, expressed in brain, thymus, spleen, bone marrow and lymph node. Low in lung and gut.

The protein localises to the cytoplasm. The protein resides in the cytoskeleton. It is found in the cell cortex. Its subcellular location is the cytoplasmic vesicle. It localises to the phagosome membrane. Functionally, may be a crucial component of the cytoskeleton of highly motile cells, functioning both in the invagination of large pieces of plasma membrane, as well as in forming protrusions of the plasma membrane involved in cell locomotion. In mycobacteria-infected cells, its retention on the phagosomal membrane prevents fusion between phagosomes and lysosomes. The sequence is that of Coronin-1A (CORO1A) from Homo sapiens (Human).